Reading from the N-terminus, the 167-residue chain is UPF0225 protein VV1_2912 (167 aa).

The protein belongs to the UPF0225 family.

This is UPF0225 protein VV1_2912 from Vibrio vulnificus (strain CMCP6).